Here is a 1034-residue protein sequence, read N- to C-terminus: MSAYAELHCLSNFSFQRGASSAAELFQRAKALGYQALAITDECTLAGIVRAWQASRDTGLKLIVGSEMQVEDGPRLVLLVEDLAGYQGLCRLITRARRRAEKGSYRLLREDFAEPLPGLLALWLTGAGEPLAQGRWLQQVFPQRLWLALELHCGQDDARHLQQQLALARQLGLPAVACGDVHMHVRGRRALQDTMTAIRHHLPVAEAGQRLFANGERHLRPVEVLQGLYPQALLDESLAIAGRCAFDLGQLRYQYPRELVPEGHDAGSWLRVLTQRGIVRRWPTGARAEVLKQIDKELTLICDLGYESYFLTVHDIVDFARRQHILCQGRGSAANSVVCFALGITEIDPDRSTLLFERFLSRERNEPPDIDVDFEHERREEVLQYLFQRYGRHRAALTAVVSTYHGAGAVRDVAKALGLPPDQVNALADCCGHWSDTPPSVERLQEAGFDPQSPVLRRVLSLTGQLIGFPRHLSQHPGGFVISEQPLDHLVPVENATMAERTVIQWDKDDLDMVGLLKVDILALGMLSAIRRCFDLIHGYRGQRYSLASIPPEDPATYEMIGRADTIGVFQIESRAQMSMLPRLKPQNFYDLVIEVAIVRPGPIQGGMVHPYLRRRNRQEPETYPSPELEGVLKRTLGVPLFQEQVMQIAIVAADYTPGEADQLRRSMAAWKRHGGLEPHRERLRRGMNRNGYSDEFATQIFEQIKGFGSYGFPESHAASFALLTYASCWLKCHEPAAFACALINSWPMGFYSPDQILQDARRHGLQVLAVDVGASDWDCSLEPIPVQPARAGNGPPGQPALRLGLRMIKGFREDDARRIERARRQRAFVDIADLGERARLDVRAQELLADAGALQALAGDRYRARWEVAGVERQLGLFAGLPSQEEAPVALPRPSVGEDLQADYHSLGTTLGPHPLALLRPQLAARRCRSSRDLLAVEHGRSVSVAGLVTGRQRPGTASGVTFVTLEDEFGNVNVVVWRDLAERQRRVLVGAQLLKVDGTLETEGEVRHLIAGRLSDLSPLLDGIHVRSRDFR.

Belongs to the DNA polymerase type-C family. DnaE2 subfamily.

Its subcellular location is the cytoplasm. It catalyses the reaction DNA(n) + a 2'-deoxyribonucleoside 5'-triphosphate = DNA(n+1) + diphosphate. In terms of biological role, DNA polymerase involved in damage-induced mutagenesis and translesion synthesis (TLS). It is not the major replicative DNA polymerase. The polypeptide is Error-prone DNA polymerase (Pseudomonas fluorescens (strain ATCC BAA-477 / NRRL B-23932 / Pf-5)).